Reading from the N-terminus, the 299-residue chain is tRNA dimethylallyltransferase (299 aa).

13-20 serves as a coordination point for ATP; it reads GPTASGKT. 15 to 20 is a binding site for substrate; that stretch reads TASGKT. An interaction with substrate tRNA region spans residues 38-41; it reads DSRQ.

Belongs to the IPP transferase family. Monomer. The cofactor is Mg(2+).

The catalysed reaction is adenosine(37) in tRNA + dimethylallyl diphosphate = N(6)-dimethylallyladenosine(37) in tRNA + diphosphate. In terms of biological role, catalyzes the transfer of a dimethylallyl group onto the adenine at position 37 in tRNAs that read codons beginning with uridine, leading to the formation of N6-(dimethylallyl)adenosine (i(6)A). The sequence is that of tRNA dimethylallyltransferase from Prochlorococcus marinus subsp. pastoris (strain CCMP1986 / NIES-2087 / MED4).